A 130-amino-acid polypeptide reads, in one-letter code: MARVTVEDCIDKVDNRFDLVLLAAHRARMISSGSQLTIDRDNDKNPVVSLREIADQTISPEDLREELVHSLQKFVEVDEPEPDTVPLIGSAGASVDADDTEVAVERMTEEELLKGLEGLAPPEEQPEEDE.

The interval 109 to 130 (EEELLKGLEGLAPPEEQPEEDE) is disordered.

Belongs to the RNA polymerase subunit omega family. As to quaternary structure, the RNAP catalytic core consists of 2 alpha, 1 beta, 1 beta' and 1 omega subunit. When a sigma factor is associated with the core the holoenzyme is formed, which can initiate transcription.

The enzyme catalyses RNA(n) + a ribonucleoside 5'-triphosphate = RNA(n+1) + diphosphate. Its function is as follows. Promotes RNA polymerase assembly. Latches the N- and C-terminal regions of the beta' subunit thereby facilitating its interaction with the beta and alpha subunits. The polypeptide is DNA-directed RNA polymerase subunit omega (Rhodopseudomonas palustris (strain BisA53)).